Here is an 82-residue protein sequence, read N- to C-terminus: Cytochrome b559 subunit alpha (82 aa).

The helical transmembrane segment at 22–36 (VIHAITLPSIFLAGF) threads the bilayer. His-24 contributes to the heme binding site.

It belongs to the PsbE/PsbF family. Heterodimer of an alpha subunit and a beta subunit. PSII is composed of 1 copy each of membrane proteins PsbA, PsbB, PsbC, PsbD, PsbE, PsbF, PsbH, PsbI, PsbJ, PsbK, PsbL, PsbM, PsbT, PsbX, PsbY, PsbZ, Psb30/Ycf12, peripheral proteins PsbO, CyanoQ (PsbQ), PsbU, PsbV and a large number of cofactors. It forms dimeric complexes. It depends on heme b as a cofactor.

Its subcellular location is the cellular thylakoid membrane. Functionally, this b-type cytochrome is tightly associated with the reaction center of photosystem II (PSII). PSII is a light-driven water:plastoquinone oxidoreductase that uses light energy to abstract electrons from H(2)O, generating O(2) and a proton gradient subsequently used for ATP formation. It consists of a core antenna complex that captures photons, and an electron transfer chain that converts photonic excitation into a charge separation. In Synechococcus sp. (strain WH7803), this protein is Cytochrome b559 subunit alpha.